A 276-amino-acid polypeptide reads, in one-letter code: Shikimate dehydrogenase (NADP(+)) (276 aa).

Residues 14–16 and threonine 61 each bind shikimate; that span reads SKS. Lysine 65 functions as the Proton acceptor in the catalytic mechanism. NADP(+) is bound at residue aspartate 77. Shikimate-binding residues include asparagine 86 and aspartate 102. Residues 127 to 131, 151 to 156, and methionine 214 each bind NADP(+); these read GAGGA and NRTPDK. Position 216 (tyrosine 216) interacts with shikimate. Glycine 238 serves as a coordination point for NADP(+).

Belongs to the shikimate dehydrogenase family. In terms of assembly, homodimer.

It carries out the reaction shikimate + NADP(+) = 3-dehydroshikimate + NADPH + H(+). The protein operates within metabolic intermediate biosynthesis; chorismate biosynthesis; chorismate from D-erythrose 4-phosphate and phosphoenolpyruvate: step 4/7. Its function is as follows. Involved in the biosynthesis of the chorismate, which leads to the biosynthesis of aromatic amino acids. Catalyzes the reversible NADPH linked reduction of 3-dehydroshikimate (DHSA) to yield shikimate (SA). The sequence is that of Shikimate dehydrogenase (NADP(+)) from Nitrosomonas europaea (strain ATCC 19718 / CIP 103999 / KCTC 2705 / NBRC 14298).